We begin with the raw amino-acid sequence, 346 residues long: uncharacterized protein (346 aa).

Histidine 65 is a binding site for Zn(2+). The active site involves aspartate 67. Position 89 (aspartate 89) interacts with Zn(2+). Catalysis depends on glutamate 115, which acts as the Proton acceptor. Residues glutamate 116, glutamate 145, and histidine 319 each contribute to the Zn(2+) site.

It belongs to the peptidase M20A family. Requires Zn(2+) as cofactor. It depends on Co(2+) as a cofactor.

This is an uncharacterized protein from Methanocaldococcus jannaschii (strain ATCC 43067 / DSM 2661 / JAL-1 / JCM 10045 / NBRC 100440) (Methanococcus jannaschii).